The primary structure comprises 445 residues: ATP-dependent protease ATPase subunit HslU (445 aa).

ATP is bound by residues I17, 59–64 (GVGKTE), D254, E319, and R391.

This sequence belongs to the ClpX chaperone family. HslU subfamily. As to quaternary structure, a double ring-shaped homohexamer of HslV is capped on each side by a ring-shaped HslU homohexamer. The assembly of the HslU/HslV complex is dependent on binding of ATP.

Its subcellular location is the cytoplasm. Its function is as follows. ATPase subunit of a proteasome-like degradation complex; this subunit has chaperone activity. The binding of ATP and its subsequent hydrolysis by HslU are essential for unfolding of protein substrates subsequently hydrolyzed by HslV. HslU recognizes the N-terminal part of its protein substrates and unfolds these before they are guided to HslV for hydrolysis. The polypeptide is ATP-dependent protease ATPase subunit HslU (Pseudomonas fluorescens (strain SBW25)).